We begin with the raw amino-acid sequence, 361 residues long: Phosphoserine aminotransferase (361 aa).

L-glutamate contacts are provided by Ser9 and Arg42. Pyridoxal 5'-phosphate contacts are provided by residues 76-77 (GR), Trp102, Thr153, Asp173, and Gln196. Lys197 carries the N6-(pyridoxal phosphate)lysine modification. 238-239 (NT) serves as a coordination point for pyridoxal 5'-phosphate.

It belongs to the class-V pyridoxal-phosphate-dependent aminotransferase family. SerC subfamily. As to quaternary structure, homodimer. It depends on pyridoxal 5'-phosphate as a cofactor.

Its subcellular location is the cytoplasm. It catalyses the reaction O-phospho-L-serine + 2-oxoglutarate = 3-phosphooxypyruvate + L-glutamate. The enzyme catalyses 4-(phosphooxy)-L-threonine + 2-oxoglutarate = (R)-3-hydroxy-2-oxo-4-phosphooxybutanoate + L-glutamate. Its pathway is amino-acid biosynthesis; L-serine biosynthesis; L-serine from 3-phospho-D-glycerate: step 2/3. It participates in cofactor biosynthesis; pyridoxine 5'-phosphate biosynthesis; pyridoxine 5'-phosphate from D-erythrose 4-phosphate: step 3/5. Catalyzes the reversible conversion of 3-phosphohydroxypyruvate to phosphoserine and of 3-hydroxy-2-oxo-4-phosphonooxybutanoate to phosphohydroxythreonine. The chain is Phosphoserine aminotransferase from Cronobacter sakazakii (strain ATCC BAA-894) (Enterobacter sakazakii).